We begin with the raw amino-acid sequence, 82 residues long: Putative defensin-like protein 134 (82 aa).

Positions 1-26 are cleaved as a signal peptide; that stretch reads MEVRSLNLCFLLVLVLLMSPAPTAVA. 4 disulfide bridges follow: cysteine 32–cysteine 79, cysteine 42–cysteine 68, cysteine 47–cysteine 74, and cysteine 51–cysteine 76.

It belongs to the DEFL family.

Its subcellular location is the secreted. The polypeptide is Putative defensin-like protein 134 (Arabidopsis thaliana (Mouse-ear cress)).